We begin with the raw amino-acid sequence, 151 residues long: MFRGANAINLDAKGRLAMPSRYRDELDSRSAGQLIVTIDAVDPCLCLYPLSEWELIEAKLRDLATFREENRRLQRLLIGNAVDLELDGSGRFLVPPRLREYARLDKRVMLVGQLNKFQLWDEDAWNALADADLAAIQKPGAMPDELRDLIL.

2 SpoVT-AbrB domains span residues A5–E52 and A81–A124.

Belongs to the MraZ family. In terms of assembly, forms oligomers.

The protein resides in the cytoplasm. The protein localises to the nucleoid. The chain is Transcriptional regulator MraZ from Pseudomonas savastanoi pv. phaseolicola (strain 1448A / Race 6) (Pseudomonas syringae pv. phaseolicola (strain 1448A / Race 6)).